A 218-amino-acid chain; its full sequence is Protein P9 (218 aa).

The protein localises to the virion membrane. This is Protein P9 (IX) from Pseudoalteromonas espejiana (Bacteriophage PM2).